Here is a 377-residue protein sequence, read N- to C-terminus: Chaperone protein DnaJ (377 aa).

In terms of domain architecture, J spans 4 to 69 (DYYEALGVER…QKRAAYDRFG (66 aa)). The segment at 135 to 213 (GKTAQIRVPT…CHGQGRVTQE (79 aa)) adopts a CR-type zinc-finger fold. Zn(2+)-binding residues include Cys-148, Cys-151, Cys-165, Cys-168, Cys-187, Cys-190, Cys-201, and Cys-204. CXXCXGXG motif repeat units lie at residues 148–155 (CDECSGSG), 165–172 (CTMCSGSG), 187–194 (CPTCNGRG), and 201–208 (CGKCHGQG).

This sequence belongs to the DnaJ family. Homodimer. It depends on Zn(2+) as a cofactor.

The protein resides in the cytoplasm. Participates actively in the response to hyperosmotic and heat shock by preventing the aggregation of stress-denatured proteins and by disaggregating proteins, also in an autonomous, DnaK-independent fashion. Unfolded proteins bind initially to DnaJ; upon interaction with the DnaJ-bound protein, DnaK hydrolyzes its bound ATP, resulting in the formation of a stable complex. GrpE releases ADP from DnaK; ATP binding to DnaK triggers the release of the substrate protein, thus completing the reaction cycle. Several rounds of ATP-dependent interactions between DnaJ, DnaK and GrpE are required for fully efficient folding. Also involved, together with DnaK and GrpE, in the DNA replication of plasmids through activation of initiation proteins. The protein is Chaperone protein DnaJ of Brucella anthropi (strain ATCC 49188 / DSM 6882 / CCUG 24695 / JCM 21032 / LMG 3331 / NBRC 15819 / NCTC 12168 / Alc 37) (Ochrobactrum anthropi).